The sequence spans 436 residues: MFDSTLNPLWQRYILAVQEEVKPALGCTEPISLALAAAVAAAELEGPVERVEAWVSPNLMKNGLGVTVPGTGMVGLPIAAALGALGGNANAGLEVLKDATAQAISDAKALLAAGKVSVKIQEPCDEILFSRAKVWNGEKWACVTIVGGHTNIVHIETHNGVVFTQQACVTEGEQESPLTVLSRTTLAEILKFVNEVPFAAIRFILDSAKLNCALSQEGLSGNWGLHIGATLEKQCARGLLAKDLSSSIVIRTSAASDARMGGATLPAMSNSGSGNQGITATMPVVVVAEHFGADDERLARALMLSHLSAIYIHNQLPRLSALCAATTAAMGAAAGMAWLVDGRYETISMAISSMIGDVSGMICDGASNSCAMKVSTSASAAWKAVLMALDDTAVTGNEGIVAHDVEQSIANLCALASHSMQQTDRQIIEIMASKAR.

Belongs to the UPF0597 family.

This chain is UPF0597 protein YhaM, found in Escherichia coli O45:K1 (strain S88 / ExPEC).